A 281-amino-acid polypeptide reads, in one-letter code: CCAAT/enhancer-binding protein epsilon (281 aa).

A disordered region spans residues 1 to 30; it reads MSHGTYYECEPRGGQQPLEFSGGRAGPGEL. A Glycyl lysine isopeptide (Lys-Gly) (interchain with G-Cter in SUMO2) cross-link involves residue lysine 121. Residue serine 181 is modified to Phosphoserine. Positions 204–267 constitute a bZIP domain; it reads SLEYRLRRER…DTLRNLFRQI (64 aa). Residues 208 to 228 are basic motif; sequence RLRRERNNIAVRKSRDKAKRR. The segment at 230–237 is leucine-zipper; it reads LETQQKVL.

Belongs to the bZIP family. C/EBP subfamily. In terms of assembly, binds DNA as a homodimer and as a heterodimer. Can form stable heterodimers with CEBPA, CEBPB and CEBPD. Interacts with GATA1 and SPI1. Interacts with SMARCD2. In terms of processing, phosphorylated. As to expression, strongest expression occurs in promyelocyte and late-myeloblast-like cell lines.

Its subcellular location is the nucleus. Transcriptional activator. C/EBP are DNA-binding proteins that recognize two different motifs: the CCAAT homology common to many promoters and the enhanced core homology common to many enhancers. Required for the promyelocyte-myelocyte transition in myeloid differentiation. The sequence is that of CCAAT/enhancer-binding protein epsilon (CEBPE) from Homo sapiens (Human).